The primary structure comprises 368 residues: 3-dehydroquinate synthase (368 aa).

Residues 69 to 74, 103 to 107, 127 to 128, Lys140, and Lys149 each bind NAD(+); these read DGEAYK, GVIGD, and TT. Glu182, His245, and His262 together coordinate Zn(2+).

This sequence belongs to the sugar phosphate cyclases superfamily. Dehydroquinate synthase family. NAD(+) serves as cofactor. It depends on Co(2+) as a cofactor. The cofactor is Zn(2+).

It is found in the cytoplasm. The catalysed reaction is 7-phospho-2-dehydro-3-deoxy-D-arabino-heptonate = 3-dehydroquinate + phosphate. Its pathway is metabolic intermediate biosynthesis; chorismate biosynthesis; chorismate from D-erythrose 4-phosphate and phosphoenolpyruvate: step 2/7. Catalyzes the conversion of 3-deoxy-D-arabino-heptulosonate 7-phosphate (DAHP) to dehydroquinate (DHQ). This Pseudomonas aeruginosa (strain ATCC 15692 / DSM 22644 / CIP 104116 / JCM 14847 / LMG 12228 / 1C / PRS 101 / PAO1) protein is 3-dehydroquinate synthase.